The following is a 335-amino-acid chain: Fructose-1,6-bisphosphatase class 1 (335 aa).

The Mg(2+) site is built by Glu92, Asp114, Leu116, and Asp117. Substrate contacts are provided by residues Asp117–Ser120, Asn209, and Lys275. Glu281 provides a ligand contact to Mg(2+).

This sequence belongs to the FBPase class 1 family. Homotetramer. The cofactor is Mg(2+).

It is found in the cytoplasm. The catalysed reaction is beta-D-fructose 1,6-bisphosphate + H2O = beta-D-fructose 6-phosphate + phosphate. It participates in carbohydrate biosynthesis; gluconeogenesis. The sequence is that of Fructose-1,6-bisphosphatase class 1 from Paracidovorax citrulli (strain AAC00-1) (Acidovorax citrulli).